A 104-amino-acid chain; its full sequence is Circadian clock oscillator protein KaiB (104 aa).

This sequence belongs to the KaiB family. The KaiABC complex composition changes during the circadian cycle to control KaiC phosphorylation. Complexes KaiC(6), KaiA(2-4):KaiC(6), KaiB(6):KaiC(6) and KaiC(6):KaiB(6):KaiA(12) are among the most important forms, many form cooperatively. Undergoes a major conformational rearrangment; in the free state forms homotetramers as a dimer of dimers. When bound to the CI domain of KaiC switches to a monomeric thioredoxin-fold (KaiB(fs)). KaiB(fs) binds CikA, leading it to dephosphorylate phospho-RpaA.

Key component of the KaiABC oscillator complex, which constitutes the main circadian regulator in cyanobacteria. Complex composition changes during the circadian cycle to control KaiC phosphorylation. KaiA stimulates KaiC autophosphorylation, while KaiB sequesters KaiA, leading to KaiC autodephosphorylation. Phospho-Ser-431 KaiC accumulation triggers binding of KaiB to form the KaiB(6):KaiC(6) complex, leading to changes in output regulators CikA and SasA. KaiB switches to a thioredoxin-like fold (KaiB(fs)) when bound to KaiC. KaiB(6):KaiC(6) formation exposes a site for KaiA binding that sequesters KaiA from KaiC, making the KaiC(6):KaiB(6):KaiA(12) complex that results in KaiC autodephosphorylation. Its function is as follows. A metamorphic protein which reversibly switches between an inactive tetrameric fold and a rare, thioredoxin-like monomeric fold (KaiB(fs)). KaiB(fs) binds phospho-KaiC, KaiA and CikA. KaiA and CikA compete for binding to KaiB(fs), and KaiB(fs) and SasA compete for binding to KaiC, thus the clock oscillator and output signal pathway are tightly coupled. This Acaryochloris marina (strain MBIC 11017) protein is Circadian clock oscillator protein KaiB.